The primary structure comprises 257 residues: MSYETLLVETQGRVGLITLNRPQALNALNAVLMRELDAALKAFDADRAVGAIVLAGSEKAFAAGADIKEMQGLDFVDGYLADFLGGWEHVANARKPMIAAVSGFALGGGCELAMMCDFIIASETAKFGQPEITLGVIPGMGGSQRLTRAVGKAKAMDLILTGRMMDAAEAERSGLVSRVVAPDRLLEEALGAAEKIASFSLPAAMMAKEAVNRSLELTLAEGLRFERRLFQSLFATEDQKEGMAAFVAKRKAEFKHR.

This sequence belongs to the enoyl-CoA hydratase/isomerase family.

It carries out the reaction a (3S)-3-hydroxyacyl-CoA = a (2E)-enoyl-CoA + H2O. The catalysed reaction is a 4-saturated-(3S)-3-hydroxyacyl-CoA = a (3E)-enoyl-CoA + H2O. In terms of biological role, could possibly oxidize fatty acids using specific components. In Rhizobium meliloti (strain 1021) (Ensifer meliloti), this protein is Probable enoyl-CoA hydratase (fadB1).